The primary structure comprises 768 residues: Degenerin mec-4 (768 aa).

The Cytoplasmic segment spans residues 1-109; that stretch reads MSWMQNLKNY…GEAPNVYYRA (109 aa). A helical membrane pass occupies residues 110–130; it reads VWVMLFLGCMIMLYLNAQSVL. Over 131-718 the chain is Extracellular; sequence DKYNRNEKIV…VNLLADFGGQ (588 aa). 2 disordered regions span residues 187 to 221 and 237 to 260; these read AGGN…GKRD and GSQG…ETTT. The segment covering 189 to 200 has biased composition (basic and acidic residues); sequence GNKEHDGEKEVI. Low complexity predominate over residues 203 to 212; the sequence is APTTPAPTTK. Over residues 243 to 252 the composition is skewed to acidic residues; that stretch reads EQEDKDDEKE. N336, N357, N480, N484, N503, and N671 each carry an N-linked (GlcNAc...) asparagine glycan. The helical transmembrane segment at 719–739 threads the bilayer; the sequence is LGLWCGISFLTCCEFVFLFLE. The Cytoplasmic portion of the chain corresponds to 740 to 768; the sequence is TAYMSAEHNYSLYKKKKAEKAKKVASGSF.

Belongs to the amiloride-sensitive sodium channel (TC 1.A.6) family. The channel is probably composed of at least the mec-2, mec-4, mec-6 and mec-10 subunits.

The protein localises to the membrane. Functionally, probable sodium channel subunit. May be needed for mechanosensory transduction (touch sensitivity). Negatively regulates the turning step of male mating behavior. The protein is Degenerin mec-4 (mec-4) of Caenorhabditis briggsae.